Reading from the N-terminus, the 255-residue chain is Imidazole glycerol phosphate synthase subunit HisF (255 aa).

Active-site residues include Asp-11 and Asp-130.

This sequence belongs to the HisA/HisF family. Heterodimer of HisH and HisF.

The protein localises to the cytoplasm. The catalysed reaction is 5-[(5-phospho-1-deoxy-D-ribulos-1-ylimino)methylamino]-1-(5-phospho-beta-D-ribosyl)imidazole-4-carboxamide + L-glutamine = D-erythro-1-(imidazol-4-yl)glycerol 3-phosphate + 5-amino-1-(5-phospho-beta-D-ribosyl)imidazole-4-carboxamide + L-glutamate + H(+). It participates in amino-acid biosynthesis; L-histidine biosynthesis; L-histidine from 5-phospho-alpha-D-ribose 1-diphosphate: step 5/9. Functionally, IGPS catalyzes the conversion of PRFAR and glutamine to IGP, AICAR and glutamate. The HisF subunit catalyzes the cyclization activity that produces IGP and AICAR from PRFAR using the ammonia provided by the HisH subunit. This chain is Imidazole glycerol phosphate synthase subunit HisF, found in Synechococcus sp. (strain ATCC 27144 / PCC 6301 / SAUG 1402/1) (Anacystis nidulans).